Consider the following 504-residue polypeptide: GTPase Obg (504 aa).

An Obg domain is found at 2–159; that stretch reads SQFVDRVVLH…KDVTLELKSM (158 aa). The interval 68–88 is disordered; the sequence is AERGNNGAGDDRHGARGKDLT. The OBG-type G domain occupies 160-340; it reads ADVGLVGFPS…LRFALMDIVR (181 aa). GTP is bound by residues 166 to 173, 191 to 195, 212 to 215, 292 to 295, and 321 to 323; these read GFPSAGKS, FTTLA, DVPG, NKMD, and STV. Serine 173 and threonine 193 together coordinate Mg(2+). One can recognise an OCT domain in the interval 364 to 444; the sequence is KRKGRFADFE…IGGITFEWDP (81 aa). Residues 449–481 form a disordered region; sequence GVDQTPAYGRGKDRRLEQTDRVTAEQRKRASQA. The span at 458-476 shows a compositional bias: basic and acidic residues; sequence RGKDRRLEQTDRVTAEQRK.

This sequence belongs to the TRAFAC class OBG-HflX-like GTPase superfamily. OBG GTPase family. As to quaternary structure, monomer. It depends on Mg(2+) as a cofactor.

Its subcellular location is the cytoplasm. Its function is as follows. An essential GTPase which binds GTP, GDP and possibly (p)ppGpp with moderate affinity, with high nucleotide exchange rates and a fairly low GTP hydrolysis rate. Plays a role in control of the cell cycle, stress response, ribosome biogenesis and in those bacteria that undergo differentiation, in morphogenesis control. The sequence is that of GTPase Obg from Corynebacterium urealyticum (strain ATCC 43042 / DSM 7109).